Reading from the N-terminus, the 506-residue chain is uncharacterized protein (506 aa).

The protein belongs to the Mg-chelatase subunits D/I family. ComM subfamily.

This is an uncharacterized protein from Escherichia coli (strain K12).